The primary structure comprises 356 residues: Replication factor C subunit 3 (356 aa).

Lysine 20 is modified (N6-acetyllysine). Position 125 is a phosphoserine (serine 125).

The protein belongs to the activator 1 small subunits family. As to quaternary structure, subunit of the RFC complex, an heteropentameric complex consisting of a large subunit RFC1 and four small subunits RFC2, RFC3, RFC4 and RFC5; the RFC complex interacts with PCNA. Forms an heterotetrameric complex with RFC2, RFC4 and RFC5; this complex has ATPase activity but is not stimulated by PCNA. The heterotetramer of subunits RFC2, RFC3, RFC4 and RFC5 interacts with RAD17. Interacts with CNTD1; this interaction facilitates crossover formation.

It is found in the nucleus. Functionally, subunit of the replication factor C (RFC) complex which acts during elongation of primed DNA templates by DNA polymerases delta and epsilon, and is necessary for ATP-dependent loading of proliferating cell nuclear antigen (PCNA) onto primed DNA. The protein is Replication factor C subunit 3 (Rfc3) of Mus musculus (Mouse).